The chain runs to 396 residues: Flavohemoprotein (396 aa).

One can recognise a Globin domain in the interval 1-136 (MLDAQTIATV…LANVFIHREA (136 aa)). Position 85 (His85) interacts with heme b. Catalysis depends on charge relay system residues Tyr95 and Glu135. Residues 147–396 (GGWEGTRPFR…YECFGPHKVL (250 aa)) form a reductase region. One can recognise an FAD-binding FR-type domain in the interval 150–255 (EGTRPFRIVA…AAPAGDFFMN (106 aa)). Residues Tyr188 and 204-207 (RQYS) contribute to the FAD site. 268–273 (GVGQTP) contacts NADP(+). An FAD-binding site is contributed by 389 to 392 (CFGP).

It belongs to the globin family. Two-domain flavohemoproteins subfamily. In the C-terminal section; belongs to the flavoprotein pyridine nucleotide cytochrome reductase family. In terms of assembly, monomer. It depends on heme b as a cofactor. FAD is required as a cofactor.

The catalysed reaction is 2 nitric oxide + NADPH + 2 O2 = 2 nitrate + NADP(+) + H(+). The enzyme catalyses 2 nitric oxide + NADH + 2 O2 = 2 nitrate + NAD(+) + H(+). Its function is as follows. Is involved in NO detoxification in an aerobic process, termed nitric oxide dioxygenase (NOD) reaction that utilizes O(2) and NAD(P)H to convert NO to nitrate, which protects the bacterium from various noxious nitrogen compounds. Therefore, plays a central role in the inducible response to nitrosative stress. The polypeptide is Flavohemoprotein (hmp) (Salmonella typhimurium (strain LT2 / SGSC1412 / ATCC 700720)).